Reading from the N-terminus, the 291-residue chain is Phosphatidylglycerol--prolipoprotein diacylglyceryl transferase (291 aa).

The next 7 helical transmembrane spans lie at 21-41 (VALHWYGLMYLVGFVFAMWLA), 60-80 (LLYAGFLGVFLGGRIGYVLFY), 96-116 (WDGGMSFHGGLIGVILVMIIF), 130-150 (FIAPLIPFGLGAGRLGNFING), 198-218 (SQLYELALEGVVLFIILNLFI), 225-245 (GAVSGLFLIGYGAFRIIVEFF), and 260-280 (ISMGQILSIPMIIAGAIMMVW). Arg-143 lines the a 1,2-diacyl-sn-glycero-3-phospho-(1'-sn-glycerol) pocket.

Belongs to the Lgt family.

The protein resides in the cell inner membrane. It catalyses the reaction L-cysteinyl-[prolipoprotein] + a 1,2-diacyl-sn-glycero-3-phospho-(1'-sn-glycerol) = an S-1,2-diacyl-sn-glyceryl-L-cysteinyl-[prolipoprotein] + sn-glycerol 1-phosphate + H(+). It participates in protein modification; lipoprotein biosynthesis (diacylglyceryl transfer). Functionally, catalyzes the transfer of the diacylglyceryl group from phosphatidylglycerol to the sulfhydryl group of the N-terminal cysteine of a prolipoprotein, the first step in the formation of mature lipoproteins. This Salmonella agona (strain SL483) protein is Phosphatidylglycerol--prolipoprotein diacylglyceryl transferase.